Here is a 589-residue protein sequence, read N- to C-terminus: Probable 9-cis-epoxycarotenoid dioxygenase NCED5, chloroplastic (589 aa).

The transit peptide at 1-45 directs the protein to the chloroplast; the sequence is MACSYILTPNPTKLNLSFAPSDLDAPSPSSSVSFTNTKPRRRKLS. Residues 21–34 are compositionally biased toward low complexity; it reads SDLDAPSPSSSVSF. The interval 21-51 is disordered; it reads SDLDAPSPSSSVSFTNTKPRRRKLSANSVSD. Positions 287, 336, 401, and 576 each coordinate Fe cation.

Belongs to the carotenoid oxygenase family. Interacts in vitro with VAR3. Fe(2+) is required as a cofactor. In terms of tissue distribution, detected only in seeds.

It localises to the plastid. It is found in the chloroplast thylakoid membrane. The catalysed reaction is a 9-cis-epoxycarotenoid + O2 = a 12'-apo-carotenal + 2-cis,4-trans-xanthoxin. It catalyses the reaction 9-cis-violaxanthin + O2 = (3S,5R,6S)-5,6-epoxy-3-hydroxy-5,6-dihydro-12'-apo-beta-caroten-12'-al + 2-cis,4-trans-xanthoxin. The enzyme catalyses 9'-cis-neoxanthin + O2 = (3S,5R,6R)-3,5-dihydroxy-6,7-didehydro-5,6-dihydro-12'-apo-beta-caroten-12'-al + 2-cis,4-trans-xanthoxin. In terms of biological role, has a 11,12(11',12') 9-cis epoxycarotenoid cleavage activity. Catalyzes the first step of abscisic-acid biosynthesis from carotenoids. The protein is Probable 9-cis-epoxycarotenoid dioxygenase NCED5, chloroplastic (NCED5) of Arabidopsis thaliana (Mouse-ear cress).